We begin with the raw amino-acid sequence, 240 residues long: Glutathione-independent glyoxalase hsp3102 (240 aa).

Active-site residues include Cys-141, His-142, and Glu-175.

Belongs to the peptidase C56 family. HSP31-like subfamily.

It is found in the cytoplasm. It localises to the nucleus. It carries out the reaction methylglyoxal + H2O = (R)-lactate + H(+). Catalyzes the conversion of methylglyoxal (MG) to D-lactate in a single glutathione (GSH)-independent step. May play a role in detoxifying endogenously produced glyoxals. Involved in protection against reactive oxygen species (ROS). The sequence is that of Glutathione-independent glyoxalase hsp3102 from Schizosaccharomyces pombe (strain 972 / ATCC 24843) (Fission yeast).